The primary structure comprises 418 residues: Tyrosine--tRNA ligase (418 aa).

Residue Y34 coordinates L-tyrosine. A 'HIGH' region motif is present at residues 39-48 (PTADSLHLGH). L-tyrosine is bound by residues Y169 and Q173. The 'KMSKS' region signature appears at 229 to 233 (KFGKS). An ATP-binding site is contributed by K232. Residues 352–418 (NNIVELLVSS…GKKKYFVLTY (67 aa)) form the S4 RNA-binding domain.

Belongs to the class-I aminoacyl-tRNA synthetase family. TyrS type 1 subfamily. In terms of assembly, homodimer.

The protein resides in the cytoplasm. It catalyses the reaction tRNA(Tyr) + L-tyrosine + ATP = L-tyrosyl-tRNA(Tyr) + AMP + diphosphate + H(+). In terms of biological role, catalyzes the attachment of tyrosine to tRNA(Tyr) in a two-step reaction: tyrosine is first activated by ATP to form Tyr-AMP and then transferred to the acceptor end of tRNA(Tyr). The protein is Tyrosine--tRNA ligase of Streptococcus pneumoniae (strain Taiwan19F-14).